Here is a 179-residue protein sequence, read N- to C-terminus: Large ribosomal subunit protein uL5 (179 aa).

The protein belongs to the universal ribosomal protein uL5 family. As to quaternary structure, part of the 50S ribosomal subunit; part of the 5S rRNA/L5/L18/L25 subcomplex. Contacts the 5S rRNA and the P site tRNA. Forms a bridge to the 30S subunit in the 70S ribosome.

Functionally, this is one of the proteins that bind and probably mediate the attachment of the 5S RNA into the large ribosomal subunit, where it forms part of the central protuberance. In the 70S ribosome it contacts protein S13 of the 30S subunit (bridge B1b), connecting the 2 subunits; this bridge is implicated in subunit movement. Contacts the P site tRNA; the 5S rRNA and some of its associated proteins might help stabilize positioning of ribosome-bound tRNAs. The polypeptide is Large ribosomal subunit protein uL5 (Prochlorococcus marinus (strain SARG / CCMP1375 / SS120)).